Here is an 892-residue protein sequence, read N- to C-terminus: NACHT, LRR and PYD domains-containing protein 6 (892 aa).

The region spanning 1 to 103 (MDQPEAPCSS…AAQLQERRLQ (103 aa)) is the Pyrin domain. A disordered region spans residues 158-181 (APEEAMGPAEEPEPGRARRSDTHT). A compositionally biased stretch (basic and acidic residues) spans 170-181 (EPGRARRSDTHT). In terms of domain architecture, NACHT spans 196 to 513 (LTVVLQGPAG…EFLAALSYLL (318 aa)). 202–209 (GPAGIGKT) lines the ATP pocket. The tract at residues 352–356 (KDKKK) is disordered. One copy of the LRR 1 repeat lies at 462 to 487 (EKELEQLELRGSKVQTLFLSKKELPG). The interval 590–614 (APEVTEGAKGLEDTEEPEEEEEGEE) is disordered. Acidic residues predominate over residues 602-614 (DTEEPEEEEEGEE). LRR repeat units follow at residues 727-747 (LCHL…VCRD), 755-778 (APAL…MLSE), 811-834 (SPAL…YLCA), and 845-868 (TLSL…KRAK).

The protein belongs to the NLRP family. Homomultimer; forms the NLRP6 inflammasome polymeric complex, a filament composed of homopolymers in response to pathogens and other damage-associated signals. The core of NLRP6 inflammasomes consists of a signal sensor component (NLRP6), an adapter (PYCARD/ASC), which recruits effector pro-inflammatory caspases (CASP1 and CASP4). Interacts (via pyrin domain) with PYCARD/ASC (via pyrin domain); interaction takes place following NLRP6 activation and formation of liquid-liquid phase separation (LLPS), initiating nucleation which greatly enhances further addition of soluble PYCARD/ASC molecules to the speck in a prion-like polymerization process. Clustered PYCARD/ASC nucleates the formation of CASP1 (or possibly CASP4) filaments through the interaction of their respective CARD domains, acting as a platform for CASP1 polymerization. CASP1 filament formation increases local enzyme concentration, resulting in trans-autocleavage and activation. Active CASP1 then processes IL1B and IL18 precursors, leading to the release of mature cytokines in the extracellular milieu and inflammatory response. Interacts with DHX15. In terms of processing, polyubiquitinated with 'Lys-63'-linked chains, promoting the interaction with PYCARD/ASC and formation of the NLRP6 inflammasome. Deubiquitination by CYLD decreases the interaction with PYCARD/ASC. As to expression, expressed in peripheral blood leukocytes, predominantly in granulocytes and, at lower levels, in CD4(+) and CD8(+) T-cells. Expressed in colonic myofibroblasts (at protein level).

The protein localises to the cytoplasm. It is found in the cytosol. The protein resides in the inflammasome. It localises to the cell membrane. Its subcellular location is the nucleus membrane. In terms of biological role, acts as the sensor component of the NLRP6 inflammasome, which mediates inflammasome activation in response to various pathogen-associated signals, leading to maturation and secretion of IL1B and IL18. Inflammasomes are supramolecular complexes that assemble in the cytosol in response to pathogens and other damage-associated signals and play critical roles in innate immunity and inflammation. Acts as a recognition receptor (PRR): recognizes and binds specific pathogens and other damage-associated signals, such as lipoteichoic acid (LTA), a cell-wall component of Gram-positive bacteria, or double stranded RNA (dsRNA). May also recognize and bind lipopolysaccharide (LPS), a major component of the outer membrane of Gram-negative bacteria; however, LPS is probably not a major activator of the NLRP6 inflammasome. Following LTA- or dsRNA-binding, NLRP6 undergoes liquid-liquid phase separation (LLPS), enhancing multivalent interactions, an essential step for the formation of the NLRP6 inflammasome polymeric complex. The NLRP6 inflammasome acts by promoting recruitment of effector pro-inflammatory caspases (CASP1 and/or CASP4) that catalyze maturation and secretion of IL1B and IL18 in the extracellular milieu. The NLRP6 inflammasome plays a central role in the maintenance of epithelial integrity and host defense against microbial infections in the intestine. Required to restrict infection against Gram-positive bacteria by recognizing lipoteichoic acid (LTA), leading to recruitment of CASP4 and CASP1, and subsequent maturation and secretion of IL1B and IL18. Involved in intestinal antiviral innate immunity together with DHX15: recognizes and binds viral dsRNA to restrict infection by enteric viruses through the interferon pathway and GSDMD-dependent release of IL18. Required to prevent infection by the apicomplexan parasite Cryptosporidium in enterocytes by promoting GSDMD-dependent release of IL18. The NLRP6 inflammasome may also regulate the gut microbiota composition by acting as a sensor of microbiota-associated metabolites to form a PYCARD/ASC-dependent inflammasome for downstream IL18 release and secretion of antimicrobial peptides. Essential for gut mucosal self-renewal and proliferation. Regulate mucus secretion in an inflammasome- and autophagy-dependent manner to prevent invasion by enteric bacteria,. During systemic bacterial infections, the NLRP6 inflammasome negatively regulates neutrophil recruitment and neutrophil extracellular traps (NETs) formation. May promote peripheral nerve recovery following injury via an inflammasome-independent mechanism. In Homo sapiens (Human), this protein is NACHT, LRR and PYD domains-containing protein 6.